The sequence spans 77 residues: Large ribosomal subunit protein bL28 (77 aa).

Belongs to the bacterial ribosomal protein bL28 family.

The chain is Large ribosomal subunit protein bL28 from Polaromonas sp. (strain JS666 / ATCC BAA-500).